A 95-amino-acid polypeptide reads, in one-letter code: UPF0125 protein BUsg_244 (95 aa).

The protein belongs to the UPF0125 (RnfH) family.

This chain is UPF0125 protein BUsg_244, found in Buchnera aphidicola subsp. Schizaphis graminum (strain Sg).